The sequence spans 416 residues: Calreticulin (416 aa).

Residues Met1–Ala17 form the signal peptide. The interval Asp18–Glu197 is N-domain. A Ca(2+)-binding site is contributed by Gln26. Lys48 is subject to N6-acetyllysine. Positions 62 and 64 each coordinate Ca(2+). Residue Lys64 is modified to N6-(2-hydroxyisobutyryl)lysine. Residues Cys105 and Cys137 are joined by a disulfide bond. An alpha-D-glucoside is bound by residues Tyr109, Lys111, Tyr128, and Asp135. Position 159 is an N6-acetyllysine (Lys159). Residues Val191 to Phe202 form a 1-1 repeat. The 4 X approximate repeats stretch occupies residues Val191–Glu255. Positions Ser193–Pro277 are disordered. Residues Asp198–Tyr308 are P-domain. Basic and acidic residues predominate over residues Lys207–Glu251. N6-acetyllysine is present on Lys209. 6 consecutive repeat copies span residues Asp210–Glu221, Asp227–Lys238, Asp244–Glu255, Gly259–Pro269, Gly273–Pro283, and Gly287–Pro297. Positions Asp237 to Glu270 are interaction with PPIB. Over residues Asp252–Trp261 the composition is skewed to acidic residues. Positions Gly259–Pro297 are 3 X approximate repeats. The C-domain stretch occupies residues Asp309–Leu416. Asp317 contributes to the an alpha-D-glucoside binding site. Position 328 (Asp328) interacts with Ca(2+). Residues Thr350–Leu416 form a disordered region. Positions Ala352–Glu379 are enriched in basic and acidic residues. Residues Glu380–Ser408 show a composition bias toward acidic residues. Residues Lys413 to Leu416 carry the Prevents secretion from ER motif.

This sequence belongs to the calreticulin family. As to quaternary structure, monomer. Interacts with GABARAP, NR3C1, PDIA3/ERp57 and TRIM21. Interacts (via P-domain) with PDIA5. Interacts with PPIB. Interacts with SPACA9. Component of an EIF2 complex at least composed of CELF1/CUGBP1, CALR, CALR3, EIF2S1, EIF2S2, HSP90B1 and HSPA5. Interacts with CLCC1.

The protein resides in the endoplasmic reticulum lumen. It is found in the cytoplasm. It localises to the cytosol. The protein localises to the cytolytic granule. Its subcellular location is the secreted. The protein resides in the extracellular space. It is found in the extracellular matrix. It localises to the cell surface. The protein localises to the sarcoplasmic reticulum lumen. Its subcellular location is the cytoplasmic vesicle. The protein resides in the secretory vesicle. It is found in the cortical granule. Calcium-binding chaperone that promotes folding, oligomeric assembly and quality control in the endoplasmic reticulum (ER) via the calreticulin/calnexin cycle. This lectin interacts transiently with almost all of the monoglucosylated glycoproteins that are synthesized in the ER. Interacts with the DNA-binding domain of NR3C1 and mediates its nuclear export. Involved in maternal gene expression regulation. May participate in oocyte maturation via the regulation of calcium homeostasis. Present in the cortical granules of non-activated oocytes, is exocytosed during the cortical reaction in response to oocyte activation and might participate in the block to polyspermy. This chain is Calreticulin (Calr), found in Mus musculus (Mouse).